The sequence spans 151 residues: Ubiquitin-conjugating enzyme E2 2 (151 aa).

Residues 4-150 (AARRRLMRDF…VRETVEKSWE (147 aa)) enclose the UBC core domain. Cys88 serves as the catalytic Glycyl thioester intermediate.

It belongs to the ubiquitin-conjugating enzyme family.

Its subcellular location is the cytoplasm. It localises to the nucleus. The enzyme catalyses S-ubiquitinyl-[E1 ubiquitin-activating enzyme]-L-cysteine + [E2 ubiquitin-conjugating enzyme]-L-cysteine = [E1 ubiquitin-activating enzyme]-L-cysteine + S-ubiquitinyl-[E2 ubiquitin-conjugating enzyme]-L-cysteine.. It participates in protein modification; protein ubiquitination. In terms of biological role, catalyzes the covalent attachment of ubiquitin to other proteins. Plays a role in transcription regulation by catalyzing the monoubiquitination of histone H2B to form H2BK123ub1. H2BK123ub1 gives a specific tag for epigenetic transcriptional activation and is also a prerequisite for H3K4me and H3K79me formation. Also involved in postreplication repair of UV-damaged DNA, in N-end rule-dependent protein degradation and in sporulation. In Fusarium solani (Filamentous fungus), this protein is Ubiquitin-conjugating enzyme E2 2 (UBC2).